Here is a 274-residue protein sequence, read N- to C-terminus: Adenosylcobinamide-GDP ribazoletransferase (274 aa).

7 helical membrane-spanning segments follow: residues 46–66 (VMASVPFIGIVLGIVGGAIAF), 69–89 (TSLGVASIVAATVIVCFWELF), 117–137 (IIADPATGLIGMGACLISILI), 151–173 (WWMVMITPMIGRFCAIFGAHSRL), 192–212 (HTIIAWLCVLLVICIGVPLAM), 216–236 (ELITITILGLLCSVTLALVEI), and 253–273 (FIMHSATALCALVFAVGVGIV).

This sequence belongs to the CobS family. Requires Mg(2+) as cofactor.

It localises to the cell membrane. It carries out the reaction alpha-ribazole + adenosylcob(III)inamide-GDP = adenosylcob(III)alamin + GMP + H(+). It catalyses the reaction alpha-ribazole 5'-phosphate + adenosylcob(III)inamide-GDP = adenosylcob(III)alamin 5'-phosphate + GMP + H(+). It functions in the pathway cofactor biosynthesis; adenosylcobalamin biosynthesis; adenosylcobalamin from cob(II)yrinate a,c-diamide: step 7/7. In terms of biological role, joins adenosylcobinamide-GDP and alpha-ribazole to generate adenosylcobalamin (Ado-cobalamin). Also synthesizes adenosylcobalamin 5'-phosphate from adenosylcobinamide-GDP and alpha-ribazole 5'-phosphate. The protein is Adenosylcobinamide-GDP ribazoletransferase of Corynebacterium diphtheriae (strain ATCC 700971 / NCTC 13129 / Biotype gravis).